The following is a 622-amino-acid chain: Kinesin light chain 2 (622 aa).

The stretch at 78 to 143 (ILALSSHLGA…KQHLLFMSQI (66 aa)) forms a coiled coil. Over residues 145–164 (KLDEDASPNEEKGDVPKDTL) the composition is skewed to basic and acidic residues. Residues 145-191 (KLDEDASPNEEKGDVPKDTLDDLFPNEDEQSPAPSPGGGDVSGQHGG) are disordered. Ser-151, Ser-175, and Ser-179 each carry phosphoserine. The span at 180–190 (PGGGDVSGQHG) shows a compositional bias: gly residues. TPR repeat units follow at residues 198–231 (LRTL…LEKT), 240–273 (ATML…REKT), 282–315 (AATL…REKV), 324–357 (AKQL…YATR), and 366–399 (AKTK…AHEK). The residue at position 445 (Ser-445) is a Phosphoserine. The stretch at 449-482 (NTTLRSLGALYRRQGKLEAAHTLEDCASRNRKQG) is one TPR 6 repeat. 2 disordered regions span residues 476–548 (SRNR…SFGK) and 563–622 (KLQG…SLVG). Basic and acidic residues predominate over residues 493–509 (ELLKDGSGRRGDRRSSR). Phosphoserine is present on residues Ser-508 and Ser-521. Low complexity predominate over residues 538 to 547 (GSLRRSGSFG). Phosphoserine occurs at positions 581, 582, 589, 608, 610, and 615. The segment covering 601 to 622 (LSDSRTLSSSSMDLSRRSSLVG) has biased composition (low complexity).

The protein belongs to the kinesin light chain family. In terms of assembly, oligomeric complex composed of two heavy chains and two light chains. Interacts (via TPR repeats) with PLEKHM2.

It is found in the cytoplasm. The protein resides in the cytoskeleton. It localises to the lysosome membrane. Kinesin is a microtubule-associated force-producing protein that plays a role in organelle transport. The light chain functions in coupling of cargo to the heavy chain or in the modulation of its ATPase activity. Through binding with PLEKHM2 and ARL8B, recruits kinesin-1 to lysosomes and hence direct lysosomes movement toward microtubule plus ends. This is Kinesin light chain 2 from Homo sapiens (Human).